Consider the following 402-residue polypeptide: 4-hydroxy-3-methylbut-2-enyl diphosphate reductase (402 aa).

Cysteine 66 is a binding site for [4Fe-4S] cluster. Histidine 96 is a (2E)-4-hydroxy-3-methylbut-2-enyl diphosphate binding site. Position 96 (histidine 96) interacts with dimethylallyl diphosphate. Residue histidine 96 participates in isopentenyl diphosphate binding. Cysteine 157 is a [4Fe-4S] cluster binding site. A (2E)-4-hydroxy-3-methylbut-2-enyl diphosphate-binding site is contributed by histidine 185. Histidine 185 contributes to the dimethylallyl diphosphate binding site. Histidine 185 provides a ligand contact to isopentenyl diphosphate. Residue glutamate 187 is the Proton donor of the active site. (2E)-4-hydroxy-3-methylbut-2-enyl diphosphate is bound at residue threonine 250. Cysteine 288 is a [4Fe-4S] cluster binding site. Serine 317, serine 318, asparagine 319, and serine 379 together coordinate (2E)-4-hydroxy-3-methylbut-2-enyl diphosphate. The dimethylallyl diphosphate site is built by serine 317, serine 318, asparagine 319, and serine 379. Isopentenyl diphosphate-binding residues include serine 317, serine 318, asparagine 319, and serine 379.

The protein belongs to the IspH family. [4Fe-4S] cluster is required as a cofactor.

The catalysed reaction is isopentenyl diphosphate + 2 oxidized [2Fe-2S]-[ferredoxin] + H2O = (2E)-4-hydroxy-3-methylbut-2-enyl diphosphate + 2 reduced [2Fe-2S]-[ferredoxin] + 2 H(+). The enzyme catalyses dimethylallyl diphosphate + 2 oxidized [2Fe-2S]-[ferredoxin] + H2O = (2E)-4-hydroxy-3-methylbut-2-enyl diphosphate + 2 reduced [2Fe-2S]-[ferredoxin] + 2 H(+). It functions in the pathway isoprenoid biosynthesis; dimethylallyl diphosphate biosynthesis; dimethylallyl diphosphate from (2E)-4-hydroxy-3-methylbutenyl diphosphate: step 1/1. Its pathway is isoprenoid biosynthesis; isopentenyl diphosphate biosynthesis via DXP pathway; isopentenyl diphosphate from 1-deoxy-D-xylulose 5-phosphate: step 6/6. Its function is as follows. Catalyzes the conversion of 1-hydroxy-2-methyl-2-(E)-butenyl 4-diphosphate (HMBPP) into a mixture of isopentenyl diphosphate (IPP) and dimethylallyl diphosphate (DMAPP). Acts in the terminal step of the DOXP/MEP pathway for isoprenoid precursor biosynthesis. The chain is 4-hydroxy-3-methylbut-2-enyl diphosphate reductase from Gloeothece citriformis (strain PCC 7424) (Cyanothece sp. (strain PCC 7424)).